Here is a 118-residue protein sequence, read N- to C-terminus: V-type proton ATPase subunit G 3 (118 aa).

Residues 1-12 show a composition bias toward polar residues; it reads MTSQSQGIQQLL. The interval 1 to 44 is disordered; that stretch reads MTSQSQGIQQLLQAEKRAKDKLDEAKKRKGKRLRQAKEEAVAET. Positions 5 to 53 form a coiled coil; the sequence is SQGIQQLLQAEKRAKDKLDEAKKRKGKRLRQAKEEAVAETDQYRMQMEK. A compositionally biased stretch (basic and acidic residues) spans 14–26; sequence AEKRAKDKLDEAK.

Belongs to the V-ATPase G subunit family. V-ATPase is a heteromultimeric enzyme made up of two complexes: the ATP-hydrolytic V1 complex and the proton translocation V0 complex. The V1 complex consists of three catalytic AB heterodimers that form a heterohexamer, three peripheral stalks each consisting of EG heterodimers, one central rotor including subunits D and F, and the regulatory subunits C and H. The proton translocation complex V0 consists of the proton transport subunit a, a ring of proteolipid subunits c9c'', rotary subunit d, subunits e and f, and the accessory subunits ATP6AP1/Ac45 and ATP6AP2/PRR. Kidney.

Functionally, subunit of the V1 complex of vacuolar(H+)-ATPase (V-ATPase), a multisubunit enzyme composed of a peripheral complex (V1) that hydrolyzes ATP and a membrane integral complex (V0) that translocates protons. V-ATPase is responsible for acidifying and maintaining the pH of intracellular compartments and in some cell types, is targeted to the plasma membrane, where it is responsible for acidifying the extracellular environment. The sequence is that of V-type proton ATPase subunit G 3 (Atp6v1g3) from Mus musculus (Mouse).